The primary structure comprises 356 residues: Cell division protein ZipA (356 aa).

Over 1–6 (MEDLQL) the chain is Periplasmic. The chain crosses the membrane as a helical span at residues 7–27 (VLFVLGAIAIVAVLVHGFWSI). Over 28–356 (RRQQPKSLKD…DYLHRIRANA (329 aa)) the chain is Cytoplasmic. The disordered stretch occupies residues 132–155 (PAQPDFSLQPPVAKEQHRGPKVSR).

The protein belongs to the ZipA family. Interacts with FtsZ via their C-terminal domains.

The protein resides in the cell inner membrane. Its function is as follows. Essential cell division protein that stabilizes the FtsZ protofilaments by cross-linking them and that serves as a cytoplasmic membrane anchor for the Z ring. Also required for the recruitment to the septal ring of downstream cell division proteins. The sequence is that of Cell division protein ZipA from Shewanella baltica (strain OS185).